A 334-amino-acid polypeptide reads, in one-letter code: Ornithine carbamoyltransferase subunit F (334 aa).

Carbamoyl phosphate contacts are provided by residues 56-59, Gln-83, Arg-107, and 134-137; these read STRT and HPTQ. L-ornithine-binding positions include Asn-168, Asp-232, and 236–237; that span reads SM. Carbamoyl phosphate-binding positions include 274 to 275 and Arg-320; that span reads CL.

Belongs to the aspartate/ornithine carbamoyltransferase superfamily. OTCase family. As to quaternary structure, in E.coli strain K12, trimer of identical or non-identical chains are composed of ArgI (I) and/or ArgF (F). The trimer has the following composition: FFI, FFF, FII, III. E.coli strains B and W, which are known to contain only ArgI, produce only a trimer of identical chains (III).

Its subcellular location is the cytoplasm. The catalysed reaction is carbamoyl phosphate + L-ornithine = L-citrulline + phosphate + H(+). The protein operates within amino-acid biosynthesis; L-arginine biosynthesis; L-arginine from L-ornithine and carbamoyl phosphate: step 1/3. Reversibly catalyzes the transfer of the carbamoyl group from carbamoyl phosphate (CP) to the N(epsilon) atom of ornithine (ORN) to produce L-citrulline, which is a substrate for argininosuccinate synthetase, the enzyme involved in the final step in arginine biosynthesis. The protein is Ornithine carbamoyltransferase subunit F of Escherichia coli (strain K12).